A 427-amino-acid polypeptide reads, in one-letter code: Serine--tRNA ligase (427 aa).

Residue 228-230 participates in L-serine binding; the sequence is TSE. Position 259 to 261 (259 to 261) interacts with ATP; the sequence is RSE. Glu-282 serves as a coordination point for L-serine. 346 to 349 serves as a coordination point for ATP; sequence EISS. Ser-384 contacts L-serine.

It belongs to the class-II aminoacyl-tRNA synthetase family. Type-1 seryl-tRNA synthetase subfamily. Homodimer. The tRNA molecule binds across the dimer.

The protein resides in the cytoplasm. It catalyses the reaction tRNA(Ser) + L-serine + ATP = L-seryl-tRNA(Ser) + AMP + diphosphate + H(+). The enzyme catalyses tRNA(Sec) + L-serine + ATP = L-seryl-tRNA(Sec) + AMP + diphosphate + H(+). Its pathway is aminoacyl-tRNA biosynthesis; selenocysteinyl-tRNA(Sec) biosynthesis; L-seryl-tRNA(Sec) from L-serine and tRNA(Sec): step 1/1. Functionally, catalyzes the attachment of serine to tRNA(Ser). Is also able to aminoacylate tRNA(Sec) with serine, to form the misacylated tRNA L-seryl-tRNA(Sec), which will be further converted into selenocysteinyl-tRNA(Sec). The chain is Serine--tRNA ligase from Ehrlichia ruminantium (strain Welgevonden).